The chain runs to 110 residues: Eukaryotic translation initiation factor eIF1 (110 aa).

The protein belongs to the SUI1 family.

Probably involved in translation. The protein is Eukaryotic translation initiation factor eIF1 of Anopheles gambiae (African malaria mosquito).